Reading from the N-terminus, the 708-residue chain is O-antigen chain terminator bifunctional methyltransferase/kinase WbdD (708 aa).

The tract at residues 1 to 210 (MTKDLNTLVS…VPRPMYLVSN (210 aa)) is methyltransferase. S-adenosyl-L-methionine contacts are provided by residues 16–17 (YQ), Arg36, Gly61, 82–87 (DFQQEN), 108–111 (GRIE), and Leu128. The tract at residues 211-459 (HRVLINDFNQ…AKLPSAEQQR (249 aa)) is kinase. Residues Pro229, His237, 241–243 (RRY), Lys252, Glu274, 309–311 (EKL), Met358, and Asp369 contribute to the ATP site. The stretch at 485–594 (AGSEALRGQI…EIEKIHRSRS (110 aa)) forms a coiled coil. Residues 601 to 669 (YRYLGLQIHL…RLYRRMNPLP (69 aa)) form a required for membrane-binding region. Residues 687–708 (VMHPELLPPEVYEIYLKLTKNK) form a required for localizing WbdA to the membrane region.

The protein belongs to the WbdD family. In terms of assembly, interacts with WbdA.

It localises to the cell inner membrane. The enzyme catalyses 3-O-phospho-alpha-D-Man-(1-&gt;2)-alpha-D-Man-(1-&gt;2)-[alpha-D-Man-(1-&gt;3)-alpha-D-Man-(1-&gt;3)-alpha-D-Man-(1-&gt;2)-alpha-D-Man-(1-&gt;2)](n)-alpha-D-Man-(1-&gt;3)-alpha-D-Man-(1-&gt;3)-alpha-D-Man-(1-&gt;3)-alpha-D-GlcNAc-di-trans,octa-cis-undecaprenyl diphosphate + S-adenosyl-L-methionine = 3-O-methylphospho-alpha-D-Man-(1-&gt;2)-alpha-D-Man-(1-&gt;2)-[alpha-D-Man-(1-&gt;3)-alpha-D-Man-(1-&gt;3)-alpha-D-Man-(1-&gt;2)-alpha-D-Man-(1-&gt;2)](n)-alpha-D-Man-(1-&gt;3)-alpha-D-Man-(1-&gt;3)-alpha-D-Man-(1-&gt;3)-alpha-D-GlcNAc-di-trans,octa-cis-undecaprenyl diphosphate + S-adenosyl-L-homocysteine. The catalysed reaction is alpha-D-Man-(1-&gt;2)-alpha-D-Man-(1-&gt;2)-[alpha-D-Man-(1-&gt;3)-alpha-D-Man-(1-&gt;3)-alpha-D-Man-(1-&gt;2)-alpha-D-Man-(1-&gt;2)](n)-alpha-D-Man-(1-&gt;3)-alpha-D-Man-(1-&gt;3)-alpha-D-Man-(1-&gt;3)-alpha-D-GlcNAc-di-trans,octa-cis-undecaprenyl diphosphate + ATP = 3-O-phospho-alpha-D-Man-(1-&gt;2)-alpha-D-Man-(1-&gt;2)-[alpha-D-Man-(1-&gt;3)-alpha-D-Man-(1-&gt;3)-alpha-D-Man-(1-&gt;2)-alpha-D-Man-(1-&gt;2)](n)-alpha-D-Man-(1-&gt;3)-alpha-D-Man-(1-&gt;3)-alpha-D-Man-(1-&gt;3)-alpha-D-GlcNAc-di-trans,octa-cis-undecaprenyl diphosphate + ADP + H(+). Its pathway is bacterial outer membrane biogenesis; LPS O-antigen biosynthesis. Functionally, regulates the length of the LPS O-antigen polysaccharide chain. Stops the polymerization of the chain by phosphorylating and then methylating the phosphate on the terminal sugar. This terminal modification is essential for export of the O-antigen across the inner membrane. WbdD is also required for correct localization of the WbdA mannosyltransferase. This is O-antigen chain terminator bifunctional methyltransferase/kinase WbdD from Escherichia coli.